A 751-amino-acid chain; its full sequence is Cytosolic neutral trehalase (751 aa).

The span at 1–15 shows a compositional bias: polar residues; sequence MDDSALPSNTSNGIN. Disordered stretches follow at residues 1 to 42 and 64 to 88; these read MDDS…NPES and DFHE…NPRK. Over residues 64 to 78 the composition is skewed to basic and acidic residues; that stretch reads DFHEMLGDRNTRRGS. Ca(2+) is bound by residues aspartate 105, aspartate 107, asparagine 109, glutamine 111, and aspartate 116. Substrate contacts are provided by residues arginine 292, 299 to 300, asparagine 336, 345 to 347, glutamate 412, arginine 461, and glycine 464; these read WD and RSQ. Catalysis depends on proton donor/acceptor residues aspartate 466 and glutamate 670.

Belongs to the glycosyl hydrolase 37 family. It depends on Ca(2+) as a cofactor.

It localises to the cytoplasm. The enzyme catalyses alpha,alpha-trehalose + H2O = alpha-D-glucose + beta-D-glucose. The protein operates within carbohydrate degradation. Activated by calcium. Its function is as follows. Hydrolyzes intracellular trehalose to glucose. The disaccharide trehalose serves as a storage carbohydrate that is mobilized during conidial germination. Regulates the level of trehalose as a protectant for cell integrity during heat stress. This is Cytosolic neutral trehalase from Emericella nidulans (strain FGSC A4 / ATCC 38163 / CBS 112.46 / NRRL 194 / M139) (Aspergillus nidulans).